We begin with the raw amino-acid sequence, 346 residues long: MDIKAAIAKVVDRKDLTTEEMIEVMQQIMTGQATPAQIGGFLVALRFKSESVGEITGAAQVMRQLASKVDIDDPHLVDTCGTGGDGSNLFNVSTAAAFVVAAAGGKVAKHGNRSVSSRSGSADVLEAAGINLDMTAEQVARAIKEIGVGFLFAPAHHSAMKHAIGPRREMGIRTIFNMLGPLTNPAGVTKQVIGVFNPLLCLPLAEVLQRLGSTHVLVVSAADGLDEISLACETHVAELKDGKISEYTLTPEDAGIMRRSLDGLTVASAEESLTLIEAALTKVTDQTSQKARDIVALNAGAAIYAADLASSFKEGVEMAQDAIGSGLAFAKLKELASFSACFKEEE.

Residues Gly-81, 84–85 (GD), 91–94 (NVST), 109–117 (KHGNRSVSS), and Ser-121 contribute to the 5-phospho-alpha-D-ribose 1-diphosphate site. Gly-81 contacts anthranilate. Ser-93 is a binding site for Mg(2+). Residue Asn-112 participates in anthranilate binding. Residue Arg-167 participates in anthranilate binding. Residues Asp-226 and Glu-227 each coordinate Mg(2+).

This sequence belongs to the anthranilate phosphoribosyltransferase family. Homodimer. Mg(2+) is required as a cofactor.

The enzyme catalyses N-(5-phospho-beta-D-ribosyl)anthranilate + diphosphate = 5-phospho-alpha-D-ribose 1-diphosphate + anthranilate. It participates in amino-acid biosynthesis; L-tryptophan biosynthesis; L-tryptophan from chorismate: step 2/5. Its function is as follows. Catalyzes the transfer of the phosphoribosyl group of 5-phosphorylribose-1-pyrophosphate (PRPP) to anthranilate to yield N-(5'-phosphoribosyl)-anthranilate (PRA). The sequence is that of Anthranilate phosphoribosyltransferase from Hahella chejuensis (strain KCTC 2396).